A 422-amino-acid chain; its full sequence is 5'-deoxyadenosine deaminase (422 aa).

Zn(2+)-binding residues include His57 and His59. The substrate site is built by Glu86 and His178. His205 contacts Zn(2+). Residues Glu208 and Asp294 each coordinate substrate. Residue Asp294 coordinates Zn(2+).

Belongs to the metallo-dependent hydrolases superfamily. MTA/SAH deaminase family. Homotetramer. Zn(2+) serves as cofactor.

The catalysed reaction is 5'-deoxyadenosine + H2O + H(+) = 5'-deoxyinosine + NH4(+). It carries out the reaction S-adenosyl-L-homocysteine + H2O + H(+) = S-inosyl-L-homocysteine + NH4(+). It catalyses the reaction S-methyl-5'-thioadenosine + H2O + H(+) = S-methyl-5'-thioinosine + NH4(+). The enzyme catalyses adenosine + H2O + H(+) = inosine + NH4(+). Its pathway is amino-acid biosynthesis; S-adenosyl-L-methionine biosynthesis. In terms of biological role, catalyzes the deamination of three SAM-derived enzymatic products, namely 5'-deoxyadenosine, S-adenosyl-L-homocysteine, and 5'-methylthioadenosine, to produce the inosine analogs. Can also deaminate adenosine. The preferred substrate for this enzyme is 5'-deoxyadenosine, but all these substrates are efficiently deaminated. Likely functions in a S-adenosyl-L-methionine (SAM) recycling pathway from S-adenosyl-L-homocysteine (SAH) produced from SAM-dependent methylation reactions. May also be involved in the recycling of 5'-deoxyadenosine, whereupon the 5'-deoxyribose moiety of 5'-deoxyinosine is further metabolized to deoxyhexoses used for the biosynthesis of aromatic amino acids in methanogens. In Methanococcus maripaludis (strain C6 / ATCC BAA-1332), this protein is 5'-deoxyadenosine deaminase.